The following is a 647-amino-acid chain: MIKITFPDGAVREFESGVTTFEIAQSISNSLAKKALAGKFNGKLIDTTRAITEDGSIEIVTPDHEDALPILRHSAAHLFAQAARRLFPDIHLGVGPAIEDGFYYDTDNTAGQISNEDLPRIEEEMKKIVKENFPSIREEVTKDEAREIFKNDPYKLELIEEHSEDEGGLTIYRQGEYVDLCRGPHVPSTGRIQIFHLLHVAGAYWRGNSDNAMMQRIYGTAWFDKKDLKNYLQMREEAKERDHRKLGKELDLFMISQEVGQGLPFWLPNGATIRRELERYIVDKEIAAGYQHVYTPPLASVELYKTSGHWDHYREDMFPTMDMGDGEEFVLRPMNCPHHIQVFKHHVHSYRELPIRIAEIGMMHRYEKSGALTGLQRVREMSLNDGHLFVTPEQIQEEFQRALQLIIDVYEDFNLTEYRFRLSLRDPQDTHKYFDNDEMWENAQTMLRAALDEMGVDYFEAEGEAAFYGPKLDIQVKTALGKEETLSTIQLDFLLPERFDLKYIGADGEEHRPVMIHRGVISTMERFTAILIENYKGAFPTWLAPHQVTLIPVSNEKHVDYAWEVAKKLRDRGVRADVDERNEKMQFKIRASQTSKIPYQLIVGDKEMEDGTVNVRRYGQKETHTVAVDEFVEAILADIANKSRVEK.

The TGS domain occupies 1–61; that stretch reads MIKITFPDGA…TEDGSIEIVT (61 aa). Residues 242-540 are catalytic; the sequence is DHRKLGKELD…LIENYKGAFP (299 aa). Residues Cys-336, His-387, and His-517 each coordinate Zn(2+).

It belongs to the class-II aminoacyl-tRNA synthetase family. As to quaternary structure, homodimer. Zn(2+) serves as cofactor.

It localises to the cytoplasm. It carries out the reaction tRNA(Thr) + L-threonine + ATP = L-threonyl-tRNA(Thr) + AMP + diphosphate + H(+). Functionally, catalyzes the attachment of threonine to tRNA(Thr) in a two-step reaction: L-threonine is first activated by ATP to form Thr-AMP and then transferred to the acceptor end of tRNA(Thr). Also edits incorrectly charged L-seryl-tRNA(Thr). This is Threonine--tRNA ligase from Streptococcus gordonii (strain Challis / ATCC 35105 / BCRC 15272 / CH1 / DL1 / V288).